The following is a 392-amino-acid chain: Protein O-glucosyltransferase 1 (392 aa).

The signal sequence occupies residues 1-23 (MERRAGSRLRAWMLLLLLCPVQG). 4 disulfides stabilise this stretch: cysteine 49–cysteine 56, cysteine 54–cysteine 357, cysteine 102–cysteine 108, and cysteine 263–cysteine 286. A glycan (N-linked (GlcNAc...) asparagine) is linked at asparagine 53. Residues 103–107 (MFPSR) are interaction with the consensus sequence C-X-S-X-[PA]-C in peptide substrates. Aspartate 133 (proton donor/acceptor) is an active-site residue. The tract at residues 172 to 178 (AVWPLYP) is interaction with the consensus sequence C-X-S-X-[PA]-C in peptide substrates. Tyrosine 177 is a binding site for UDP-alpha-D-glucose. N-linked (GlcNAc...) asparagine glycosylation is present at asparagine 204. UDP-alpha-D-glucose-binding positions include serine 212, arginine 218, and 274–279 (VAASFR). Residue asparagine 373 is glycosylated (N-linked (GlcNAc...) asparagine). The short motif at 389-392 (KTEL) is the Prevents secretion from ER element.

It belongs to the glycosyltransferase 90 family. In terms of tissue distribution, widely expressed in newborn and adult tissues (at protein level).

It localises to the endoplasmic reticulum lumen. The enzyme catalyses L-seryl-[EGF-like domain protein] + UDP-alpha-D-xylose = 3-O-(beta-D-xylosyl)-L-seryl-[EGF-like domain protein] + UDP + H(+). It catalyses the reaction L-seryl-[EGF-like domain protein] + UDP-alpha-D-glucose = 3-O-(beta-D-glucosyl)-L-seryl-[EGF-like domain protein] + UDP + H(+). Its pathway is protein modification; protein glycosylation. Dual specificity glycosyltransferase that catalyzes the transfer of glucose and xylose from UDP-glucose and UDP-xylose, respectively, to a serine residue found in the consensus sequence of C-X-S-X-P-C. Specifically targets extracellular EGF repeats of protein such as CRB2, F7, F9 and NOTCH2. Acts as a positive regulator of Notch signaling by mediating O-glucosylation of Notch, leading to regulate muscle development. Notch glucosylation does not affect Notch ligand binding. Required during early development to promote gastrulation: acts by mediating O-glucosylation of CRB2, which is required for CRB2 localization to the cell membrane. This is Protein O-glucosyltransferase 1 from Mus musculus (Mouse).